The primary structure comprises 639 residues: 1-deoxy-D-xylulose-5-phosphate synthase (639 aa).

Thiamine diphosphate contacts are provided by residues histidine 79 and 120 to 122 (GHS). Aspartate 151 serves as a coordination point for Mg(2+). Residues 152–153 (GG), asparagine 180, tyrosine 288, and glutamate 370 each bind thiamine diphosphate. Position 180 (asparagine 180) interacts with Mg(2+).

Belongs to the transketolase family. DXPS subfamily. As to quaternary structure, homodimer. The cofactor is Mg(2+). Thiamine diphosphate serves as cofactor.

The catalysed reaction is D-glyceraldehyde 3-phosphate + pyruvate + H(+) = 1-deoxy-D-xylulose 5-phosphate + CO2. It participates in metabolic intermediate biosynthesis; 1-deoxy-D-xylulose 5-phosphate biosynthesis; 1-deoxy-D-xylulose 5-phosphate from D-glyceraldehyde 3-phosphate and pyruvate: step 1/1. In terms of biological role, catalyzes the acyloin condensation reaction between C atoms 2 and 3 of pyruvate and glyceraldehyde 3-phosphate to yield 1-deoxy-D-xylulose-5-phosphate (DXP). This is 1-deoxy-D-xylulose-5-phosphate synthase from Methylococcus capsulatus (strain ATCC 33009 / NCIMB 11132 / Bath).